A 183-amino-acid polypeptide reads, in one-letter code: Ras-like protein (183 aa).

10–17 (GAGGVGKS) contributes to the GTP binding site. An Effector region motif is present at residues 32–40 (YDPTIEDSY). Residues 57–61 (DTAGQ) and 116–119 (NKCD) contribute to the GTP site.

This sequence belongs to the small GTPase superfamily. Ras family.

It localises to the cell membrane. The catalysed reaction is GTP + H2O = GDP + phosphate + H(+). Alternates between an inactive form bound to GDP and an active form bound to GTP. Activated by a guanine nucleotide-exchange factor (GEF) and inactivated by a GTPase-activating protein (GAP). Its function is as follows. Ras proteins bind GDP/GTP and possess intrinsic GTPase activity. This is Ras-like protein from Carassius auratus (Goldfish).